Reading from the N-terminus, the 152-residue chain is MSTPARKRLMRDFKRLQQDPPAGISGAPQDNNIMLWNAVIFGPDDTPWDGGTFKLSLQFSEDYPNKPPTVRFVSRMFHPNIYADGSICLDILQNQWSPIYDVAAILTSIQSLLCDPNPNSPANSEAARMFSESKREYNRRVREVVEQSWTAD.

One can recognise a UBC core domain in the interval 4–150 (PARKRLMRDF…VREVVEQSWT (147 aa)). Cys88 functions as the Glycyl thioester intermediate in the catalytic mechanism.

The protein belongs to the ubiquitin-conjugating enzyme family. In terms of tissue distribution, expressed in all tissues examined. Lower levels found in leaves.

The catalysed reaction is S-ubiquitinyl-[E1 ubiquitin-activating enzyme]-L-cysteine + [E2 ubiquitin-conjugating enzyme]-L-cysteine = [E1 ubiquitin-activating enzyme]-L-cysteine + S-ubiquitinyl-[E2 ubiquitin-conjugating enzyme]-L-cysteine.. It functions in the pathway protein modification; protein ubiquitination. In terms of biological role, accepts the ubiquitin from the E1 complex and catalyzes its covalent attachment to other proteins. In Arabidopsis thaliana (Mouse-ear cress), this protein is Ubiquitin-conjugating enzyme E2 2 (UBC2).